The chain runs to 167 residues: Iron-sulfur cluster assembly enzyme ISCU (167 aa).

The N-terminal 34 residues, 1-34 (MAAAGAFRLRRAASALLLRSPRLPARELSAPARL), are a transit peptide targeting the mitochondrion. A Phosphoserine; by MTOR modification is found at Ser-14. Residue Pro-46 participates in Zn(2+) binding. Catalysis depends on Cys-69, which acts as the Cysteine persulfide intermediate. Cys-69 carries the post-translational modification Cysteine persulfide. 5 residues coordinate Zn(2+): Gly-70, Asp-71, Cys-95, Lys-112, and Cys-138. Cys-138 serves as the catalytic Cysteine persulfide intermediate. Cys-138 carries the post-translational modification Cysteine persulfide.

Belongs to the NifU family. In terms of assembly, homodimer; Tyr-35-mediated dimerization of two iron- and sulfide-containing ISCU subunit bind to the cysteine desulfurase complex. Component of the mitochondrial core iron-sulfur cluster (ISC) complex composed of NFS1, LYRM4, NDUFAB1, ISCU, FXN, and FDX2; this complex is an heterohexamer containing two copies of each monomer. Interacts (D-state) with NFS1 (homodimer form); each monomer interacts with the C-terminal regions of each NFS1 monomer. Interacts (monomer form) with FXN (via ferrous form); the interaction is possible when both are bound to the dimeric form of the cysteine desulfurase complex (NFS1:LYRM4) and enhances FXN interaction to the dimeric form of the cysteine desulfurase complex (NFS1:LYRM4). Interacts with GLRX5. Interacts (D-state) with HSPA9. Interacts (S-state) with HSCB; this interaction stimulates the ATPase activity of HSPA9. As to quaternary structure, component of the cytoplasmic core iron-sulfur cluster (ISC) complex composed at least of NFS1, LYRM4, and ISCU; this complex interacts with FXN. Monomer; each monomer binds to the C-terminal regions of NFS1 (cytoplasmic and homodimer form). Interacts with NFS1 (cytoplasmic and homodimer form); this interaction promotes de novo iron-sulfur cluster formation. Interacts with HSCB (cytoplasmic form); this interaction stabilizes the (Fe-S) clusters on ISCU. Phosphorylation at Ser-14 is required for ISCU protein stabilization in the cytosol, whereas dephosphorylation of Ser-14, due to the inhibition of mTORC1 (mammalian target of rapamycin complex 1) complex, leads to degradation of the precursor form and ultimately to a decrease in the mitochondrial mature form. Post-translationally, cysteine persulfide is reduced by thiol-containing molecules such as glutathione and L-cysteine. As to expression, detected in heart, liver, skeletal muscle, brain, pancreas, kidney, lung and placenta.

The protein resides in the mitochondrion. It localises to the cytoplasm. It is found in the nucleus. In terms of biological role, mitochondrial scaffold protein, of the core iron-sulfur cluster (ISC) assembly complex, that provides the structural architecture on which the [2Fe-2S] clusters are assembled. The core iron-sulfur cluster (ISC) assembly complex is involved in the de novo synthesis of a [2Fe-2S] cluster, the first step of the mitochondrial iron-sulfur protein biogenesis. This process is initiated by the cysteine desulfurase complex (NFS1:LYRM4:NDUFAB1) that produces persulfide which is delivered on the scaffold protein ISCU in a FXN-dependent manner. Then this complex is stabilized by FDX2 which provides reducing equivalents to accomplish the [2Fe-2S] cluster assembly. Finally, the [2Fe-2S] cluster is transferred from ISCU to chaperone proteins, including HSCB, HSPA9 and GLRX5. Exists as two slow interchanging conformational states, a structured (S) and disordered (D) form. May modulate NFS1 desulfurase activity in a zinc-dependent manner. Modulates the interaction between FXN and the cysteine desulfurase complex. Its function is as follows. Cytoplasmic scaffold protein, of the cytoplasmic core iron-sulfur cluster (ISC) assembly complex that provides the structural architecture on which the Fe-S clusters are assembled and may be involved in the cytoplasmic iron-sulfur protein biogenesis. This Homo sapiens (Human) protein is Iron-sulfur cluster assembly enzyme ISCU.